Here is a 171-residue protein sequence, read N- to C-terminus: Adenine phosphoribosyltransferase (171 aa).

The protein belongs to the purine/pyrimidine phosphoribosyltransferase family. In terms of assembly, homodimer.

The protein localises to the cytoplasm. The enzyme catalyses AMP + diphosphate = 5-phospho-alpha-D-ribose 1-diphosphate + adenine. It functions in the pathway purine metabolism; AMP biosynthesis via salvage pathway; AMP from adenine: step 1/1. Functionally, catalyzes a salvage reaction resulting in the formation of AMP, that is energically less costly than de novo synthesis. This is Adenine phosphoribosyltransferase from Acidiphilium cryptum (strain JF-5).